Consider the following 419-residue polypeptide: D-mannonate dehydratase (419 aa).

Positions 54 and 139 each coordinate substrate. Tyr176 acts as the Proton donor/acceptor in catalysis. Position 227 (Asp227) interacts with Mg(2+). The active-site Proton donor/acceptor is the His229. Residues Glu253 and Glu279 each coordinate Mg(2+). 5 residues coordinate substrate: Glu279, Arg300, His329, Asp333, and Glu356.

Belongs to the mandelate racemase/muconate lactonizing enzyme family. GalD subfamily. Mg(2+) is required as a cofactor.

It carries out the reaction D-mannonate = 2-dehydro-3-deoxy-D-gluconate + H2O. It functions in the pathway carbohydrate metabolism; pentose and glucuronate interconversion. Functionally, catalyzes the dehydration of D-mannonate. Has no detectable activity with a panel of 70 other acid sugars (in vitro). This Xanthomonas oryzae pv. oryzicola (strain BLS256) protein is D-mannonate dehydratase.